The following is a 156-amino-acid chain: Deoxyuridine 5'-triphosphate nucleotidohydrolase (156 aa).

Residues 76 to 78, asparagine 89, 93 to 95, and lysine 103 contribute to the substrate site; these read RSG and TVD.

The protein belongs to the dUTPase family. Mg(2+) is required as a cofactor.

It catalyses the reaction dUTP + H2O = dUMP + diphosphate + H(+). It participates in pyrimidine metabolism; dUMP biosynthesis; dUMP from dCTP (dUTP route): step 2/2. Functionally, this enzyme is involved in nucleotide metabolism: it produces dUMP, the immediate precursor of thymidine nucleotides and it decreases the intracellular concentration of dUTP so that uracil cannot be incorporated into DNA. In Rhizobium johnstonii (strain DSM 114642 / LMG 32736 / 3841) (Rhizobium leguminosarum bv. viciae), this protein is Deoxyuridine 5'-triphosphate nucleotidohydrolase.